We begin with the raw amino-acid sequence, 575 residues long: Dihydroxy-acid dehydratase (575 aa).

Residue C64 coordinates [2Fe-2S] cluster. D96 is a Mg(2+) binding site. Position 137 (C137) interacts with [2Fe-2S] cluster. Mg(2+) contacts are provided by D138 and K139. K139 bears the N6-carboxylysine mark. [2Fe-2S] cluster is bound at residue C214. Residue E465 participates in Mg(2+) binding. The active-site Proton acceptor is S491.

It belongs to the IlvD/Edd family. In terms of assembly, homodimer. The cofactor is [2Fe-2S] cluster. It depends on Mg(2+) as a cofactor.

It carries out the reaction (2R)-2,3-dihydroxy-3-methylbutanoate = 3-methyl-2-oxobutanoate + H2O. The catalysed reaction is (2R,3R)-2,3-dihydroxy-3-methylpentanoate = (S)-3-methyl-2-oxopentanoate + H2O. It functions in the pathway amino-acid biosynthesis; L-isoleucine biosynthesis; L-isoleucine from 2-oxobutanoate: step 3/4. Its pathway is amino-acid biosynthesis; L-valine biosynthesis; L-valine from pyruvate: step 3/4. In terms of biological role, functions in the biosynthesis of branched-chain amino acids. Catalyzes the dehydration of (2R,3R)-2,3-dihydroxy-3-methylpentanoate (2,3-dihydroxy-3-methylvalerate) into 2-oxo-3-methylpentanoate (2-oxo-3-methylvalerate) and of (2R)-2,3-dihydroxy-3-methylbutanoate (2,3-dihydroxyisovalerate) into 2-oxo-3-methylbutanoate (2-oxoisovalerate), the penultimate precursor to L-isoleucine and L-valine, respectively. The polypeptide is Dihydroxy-acid dehydratase (Mycobacterium bovis (strain ATCC BAA-935 / AF2122/97)).